Reading from the N-terminus, the 359-residue chain is uncharacterized protein (359 aa).

The first 17 residues, 1–17 (MLGRSLTSVLIVPTGIG), serve as a signal peptide directing secretion. The N-palmitoyl cysteine moiety is linked to residue C18. Residue C18 is the site of S-diacylglycerol cysteine attachment.

Its subcellular location is the cell membrane. This is an uncharacterized protein from Synechococcus sp. (strain ATCC 27144 / PCC 6301 / SAUG 1402/1) (Anacystis nidulans).